Reading from the N-terminus, the 191-residue chain is Thymidine kinase (191 aa).

Residues 15–22 (GSMFSGKS) and 88–91 (DEVQ) each bind ATP. E89 (proton acceptor) is an active-site residue. Zn(2+)-binding residues include C145, C148, C183, and H186.

It belongs to the thymidine kinase family. In terms of assembly, homotetramer.

The protein resides in the cytoplasm. It carries out the reaction thymidine + ATP = dTMP + ADP + H(+). This chain is Thymidine kinase, found in Macrococcus caseolyticus (strain JCSC5402) (Macrococcoides caseolyticum).